The following is a 238-amino-acid chain: ATP synthase subunit a (238 aa).

5 helical membrane passes run 18–38, 75–95, 112–132, 179–199, and 203–223; these read LTILAMSLLTITIIFILVFWA, YSLLMFILFSFVFIANNLGLM, NFGVDITLSLLVAFICHIEGI, VVTGLLLQLAVLSPFTGPLAF, and IVWTAFSMFIGFIQAYVFIIL.

It belongs to the ATPase A chain family. As to quaternary structure, F-type ATPases have 2 components, CF(1) - the catalytic core - and CF(0) - the membrane proton channel. CF(1) has five subunits: alpha(3), beta(3), gamma(1), delta(1), epsilon(1). CF(0) has three main subunits: a(1), b(2) and c(9-12). The alpha and beta chains form an alternating ring which encloses part of the gamma chain. CF(1) is attached to CF(0) by a central stalk formed by the gamma and epsilon chains, while a peripheral stalk is formed by the delta and b chains.

It is found in the cell membrane. Its function is as follows. Key component of the proton channel; it plays a direct role in the translocation of protons across the membrane. The protein is ATP synthase subunit a of Streptococcus agalactiae serotype Ia (strain ATCC 27591 / A909 / CDC SS700).